Consider the following 64-residue polypeptide: Large ribosomal subunit protein bL33m (64 aa).

Belongs to the bacterial ribosomal protein bL33 family. As to quaternary structure, component of the mitochondrial ribosome large subunit (39S) which comprises a 16S rRNA and about 50 distinct proteins.

The protein localises to the mitochondrion. This chain is Large ribosomal subunit protein bL33m (mRpL33), found in Drosophila melanogaster (Fruit fly).